The primary structure comprises 174 residues: NADH-ubiquinone oxidoreductase chain 6 (174 aa).

4 helical membrane passes run 24–44 (LALG…SGLM), 53–73 (ILFL…TSLA), 82–102 (IKLT…SMIL), and 143–163 (FVTI…VKIT).

It belongs to the complex I subunit 6 family.

The protein resides in the mitochondrion membrane. It carries out the reaction a ubiquinone + NADH + 5 H(+)(in) = a ubiquinol + NAD(+) + 4 H(+)(out). Core subunit of the mitochondrial membrane respiratory chain NADH dehydrogenase (Complex I) that is believed to belong to the minimal assembly required for catalysis. Complex I functions in the transfer of electrons from NADH to the respiratory chain. The immediate electron acceptor for the enzyme is believed to be ubiquinone. The protein is NADH-ubiquinone oxidoreductase chain 6 (mt:ND6) of Drosophila yakuba (Fruit fly).